We begin with the raw amino-acid sequence, 141 residues long: Sigma factor binding protein 2, chloroplastic (141 aa).

The span at 1–20 (MDQSSSTLLINQRKSSSSPT) shows a compositional bias: polar residues. Positions 1-36 (MDQSSSTLLINQRKSSSSPTRIPPKQKRKSTTTHKP) are disordered. The N-terminal 38 residues, 1–38 (MDQSSSTLLINQRKSSSSPTRIPPKQKRKSTTTHKPIK), are a transit peptide targeting the chloroplast. The short motif at 13–29 (RKSSSSPTRIPPKQKRK) is the Bipartite nuclear localization signal element. The span at 24–36 (PKQKRKSTTTHKP) shows a compositional bias: basic residues. The short motif at 55 to 64 (FRELVQELTG) is the VQ element.

In terms of assembly, interacts with sigma factors in chloroplast. Interacts with WRKY33 in the nucleus.

It is found in the plastid. Its subcellular location is the chloroplast. The protein resides in the nucleus. In terms of biological role, functions as activator of WRKY33 in plant defense against necrotrophic pathogens by stimulating the DNA-binding activity of WRKY33. In Arabidopsis thaliana (Mouse-ear cress), this protein is Sigma factor binding protein 2, chloroplastic (SIB2).